Here is a 459-residue protein sequence, read N- to C-terminus: Putrescine aminotransferase (459 aa).

Pyridoxal 5'-phosphate-binding positions include 150–151 (GT) and Gln274. Lys300 is subject to N6-(pyridoxal phosphate)lysine. Thr332 provides a ligand contact to pyridoxal 5'-phosphate.

Belongs to the class-III pyridoxal-phosphate-dependent aminotransferase family. Putrescine aminotransferase subfamily. Pyridoxal 5'-phosphate is required as a cofactor.

The enzyme catalyses an alkane-alpha,omega-diamine + 2-oxoglutarate = an omega-aminoaldehyde + L-glutamate. The catalysed reaction is putrescine + 2-oxoglutarate = 1-pyrroline + L-glutamate + H2O. It catalyses the reaction cadaverine + 2-oxoglutarate = 5-aminopentanal + L-glutamate. It functions in the pathway amine and polyamine degradation; putrescine degradation; 4-aminobutanal from putrescine (transaminase route): step 1/1. In terms of biological role, catalyzes the aminotransferase reaction from putrescine to 2-oxoglutarate, leading to glutamate and 4-aminobutanal, which spontaneously cyclizes to form 1-pyrroline. This is the first step in one of two pathways for putrescine degradation, where putrescine is converted into 4-aminobutanoate (gamma-aminobutyrate or GABA) via 4-aminobutanal. Also functions as a cadaverine transaminase in a a L-lysine degradation pathway to succinate that proceeds via cadaverine, glutarate and L-2-hydroxyglutarate. In Escherichia fergusonii (strain ATCC 35469 / DSM 13698 / CCUG 18766 / IAM 14443 / JCM 21226 / LMG 7866 / NBRC 102419 / NCTC 12128 / CDC 0568-73), this protein is Putrescine aminotransferase.